Consider the following 337-residue polypeptide: 2-oxoglutarate receptor 1 (337 aa).

At Met1–Pro37 the chain is on the extracellular side. N-linked (GlcNAc...) asparagine glycosylation occurs at Asn23. The helical transmembrane segment at Val38–Tyr58 threads the bilayer. Over Val59–Thr69 the chain is Cytoplasmic. A helical transmembrane segment spans residues Ile70 to Ile90. The Extracellular segment spans residues His91–Asn116. A disulfide bond links Cys106 and Cys183. Residues Leu117–His137 traverse the membrane as a helical segment. Residues Pro138–Val151 lie on the Cytoplasmic side of the membrane. Residues Val152–Ile172 form a helical membrane-spanning segment. Over Thr173–Leu200 the chain is Extracellular. The chain crosses the membrane as a helical span at residues Ile201–Ile221. At Ile222–Leu242 the chain is on the cytoplasmic side. A helical membrane pass occupies residues Thr243–Ile263. At Arg264–Tyr284 the chain is on the extracellular side. Residues Ile285–Val305 form a helical membrane-spanning segment. Topologically, residues Ser306–Pro337 are cytoplasmic.

Belongs to the G-protein coupled receptor 1 family. In terms of tissue distribution, highly expressed in mast cells and is found predominantly in the tissues of the respiratory tract and kidneys.

The protein resides in the cell membrane. G protein-coupled receptor for dicarboxylates and amino dicarboxylates. Receptor for itaconate, a metabolite produced by myeloid lineages. In the respiratory epithelium, couples the binding of itaconate to the activation of GNA11 and downstream intracellular Ca(2+) release, leading to mucocilliary clearance of airborne pathogens. Receptor for leukotriene E4 (LTE4) produced by mast cells upon allergic inflammation. Binds with high affinity to LTE4 and elicits mucin release from pulmonary epithelium in response to airborne fungi allergens. Regulates mucin-producing goblet cell homeostasis. Receptor for alpha-ketoglutarate produced by proximal tubule renal cells upon metabolic alkalosis. In an intrarenal paracrine signaling pathway, binds alpha-ketoglutarate and drives transepithelial salt reabsorption and bicarbonate secretion by SLC26A4/pendrin-positive intercalated cells. This is 2-oxoglutarate receptor 1 (Oxgr1) from Rattus norvegicus (Rat).